The following is a 94-amino-acid chain: NADH dehydrogenase [ubiquinone] iron-sulfur protein 3, mitochondrial (94 aa).

This sequence belongs to the complex I 30 kDa subunit family. As to quaternary structure, core subunit of respiratory chain NADH dehydrogenase (Complex I) which is composed of 45 different subunits. Interacts with NDUFAF3. Interacts with RAB5IF. Found in subcomplexes containing subunits NDUFS2, MT-ND1 and NDUFA13.

It localises to the mitochondrion inner membrane. It catalyses the reaction a ubiquinone + NADH + 5 H(+)(in) = a ubiquinol + NAD(+) + 4 H(+)(out). Its function is as follows. Core subunit of the mitochondrial membrane respiratory chain NADH dehydrogenase (Complex I) which catalyzes electron transfer from NADH through the respiratory chain, using ubiquinone as an electron acceptor. Essential for the catalytic activity and assembly of complex I. The sequence is that of NADH dehydrogenase [ubiquinone] iron-sulfur protein 3, mitochondrial from Mesocricetus auratus (Golden hamster).